The primary structure comprises 207 residues: Small ribosomal subunit protein uS4c (207 aa).

Residues 22-51 (TQKNCTRDFPPGQHGPKKKGGGNQKTKESQ) are disordered. One can recognise an S4 RNA-binding domain in the interval 97-158 (MRLDTIIFRL…NSQNFVKNLL (62 aa)).

The protein belongs to the universal ribosomal protein uS4 family. In terms of assembly, part of the 30S ribosomal subunit. Contacts protein S5. The interaction surface between S4 and S5 is involved in control of translational fidelity.

It localises to the plastid. It is found in the chloroplast. One of the primary rRNA binding proteins, it binds directly to 16S rRNA where it nucleates assembly of the body of the 30S subunit. In terms of biological role, with S5 and S12 plays an important role in translational accuracy. This Chlorella vulgaris (Green alga) protein is Small ribosomal subunit protein uS4c (rps4).